A 376-amino-acid polypeptide reads, in one-letter code: MSNSTLTLAQMLIARRSLTPDDDGCQKMIMHRLAGLGFKSDSMTFGEVENLWTRKGSDAPLVCFAGHTDVVPTGPVTQWDSDPFTPVVRDGFLYGRGAADMKTSLAAFVTAIEEFIELHPDHKGSIALLITSDEEGPAVDGTVKVVEALQTRGEMIDYCIVGEPTCTNQLGDTIKNGRRGSLSGNLTVRGIQGHIAYPHLARNPIHTAAPAIAELAQTVWDNGNEYFPATTWHISNIHGGTGATNVIPGEINLLFNFRFSTASTVDSLKARVHEILDRHGLDYELIWELSGKPYLTPRGTLADAVSAAIREVTGIEPELSTTGGTSDGRFIADICQQVVEFGPRNATIHKINESVEVADVERLARIYRLTLENLLL.

Zn(2+) is bound at residue His67. Residue Asp69 is part of the active site. Asp100 is a Zn(2+) binding site. Glu134 acts as the Proton acceptor in catalysis. Zn(2+) is bound by residues Glu135, Glu163, and His349.

Belongs to the peptidase M20A family. DapE subfamily. In terms of assembly, homodimer. Requires Zn(2+) as cofactor. The cofactor is Co(2+).

It carries out the reaction N-succinyl-(2S,6S)-2,6-diaminopimelate + H2O = (2S,6S)-2,6-diaminopimelate + succinate. The protein operates within amino-acid biosynthesis; L-lysine biosynthesis via DAP pathway; LL-2,6-diaminopimelate from (S)-tetrahydrodipicolinate (succinylase route): step 3/3. In terms of biological role, catalyzes the hydrolysis of N-succinyl-L,L-diaminopimelic acid (SDAP), forming succinate and LL-2,6-diaminopimelate (DAP), an intermediate involved in the bacterial biosynthesis of lysine and meso-diaminopimelic acid, an essential component of bacterial cell walls. In Nitrosomonas europaea (strain ATCC 19718 / CIP 103999 / KCTC 2705 / NBRC 14298), this protein is Succinyl-diaminopimelate desuccinylase.